A 122-amino-acid chain; its full sequence is Large ribosomal subunit protein uL14c (122 aa).

This sequence belongs to the universal ribosomal protein uL14 family. Part of the 50S ribosomal subunit.

It is found in the plastid. The protein resides in the chloroplast. Functionally, binds to 23S rRNA. The polypeptide is Large ribosomal subunit protein uL14c (Chlorella vulgaris (Green alga)).